A 206-amino-acid chain; its full sequence is MAANKSKGQSSLALHKVIMVGSGGVGKSALTLQFMYDEFVEDYEPTKADSYRKKVVLDGEEVQIDILDTAGQEDYAAIRDNYFRSGEGFLLVFSITEHESFTATAEFREQILRVKAEEDKIPLLVVGNKSDLEERRQVPVEEARSKAEEWGVQYVETSAKTRANVDKVFFDLMREIRTKKMSENKDKNGKKSSKNKKSFKERCCLL.

Residue 21-29 (GSGGVGKSA) coordinates GTP. Residues 43–51 (YEPTKADSY) carry the Effector region motif. Residues 68–72 (DTAGQ), 128–131 (NKSD), and 158–160 (SAK) contribute to the GTP site. The span at 180-189 (KMSENKDKNG) shows a compositional bias: basic and acidic residues. Residues 180-206 (KMSENKDKNGKKSSKNKKSFKERCCLL) form a disordered region. Residue C203 is modified to Cysteine methyl ester. Residue C203 is the site of S-geranylgeranyl cysteine attachment. The propeptide at 204–206 (CLL) is removed in mature form.

It belongs to the small GTPase superfamily. Ras family. As to quaternary structure, interacts with EXOC2/Sec5 and EXOC8/Exo84. Interacts (via effector domain) with RALBP1. Post-translationally, prenylation is essential for membrane localization. The farnesylated form confers resistance to the proapoptotic and anti-anchorage-dependent growth effects of some geranylgeranyltransferase I inhibitors.

The protein resides in the cell membrane. It is found in the midbody. The enzyme catalyses GTP + H2O = GDP + phosphate + H(+). Alternates between an inactive form bound to GDP and an active form bound to GTP. Activated by a guanine nucleotide-exchange factor (GEF) and inactivated by a GTPase-activating protein (GAP). Its function is as follows. Multifunctional GTPase involved in a variety of cellular processes including gene expression, cell migration, cell proliferation, oncogenic transformation and membrane trafficking. Accomplishes its multiple functions by interacting with distinct downstream effectors. Acts as a GTP sensor for GTP-dependent exocytosis of dense core vesicles. Required both to stabilize the assembly of the exocyst complex and to localize functional exocyst complexes to the leading edge of migrating cells. Required for suppression of apoptosis. In late stages of cytokinesis, upon completion of the bridge formation between dividing cells, mediates exocyst recruitment to the midbody to drive abscission. Involved in ligand-dependent receptor mediated endocytosis of the EGF and insulin receptors. This chain is Ras-related protein Ral-B (RALB), found in Pongo abelii (Sumatran orangutan).